Consider the following 295-residue polypeptide: MQASNSFSSPDSLSTYLSEINQYPLLTQPQEQELSKRFRAGDLAAGHQLVTANLRFVVKVAYEYRSYGLKMSDLIQEANIGLMKAVQKFDPDKGIRLISYAVWWIRAYIQNCILKNWSLVKLGTTQAQRRLFFSLARTRRELEKMGAGDANVVNAEEIARKLNVKASEVREMEQRMGGRDLSLDAPMGEDGDATHLDFVESESVSAVDEVADRQQANLTRELVQRALRRLDPRERFIIEQRVMGDAEMTLSELGEHFGFSRERARQLEIRAKDKLKLALVTLMAEAGVDESTLNA.

A Polymerase core binding motif is present at residues 73 to 86 (DLIQEANIGLMKAV). The segment at residues 250–269 (LSELGEHFGFSRERARQLEI) is a DNA-binding region (H-T-H motif).

This sequence belongs to the sigma-70 factor family.

Sigma factors are initiation factors that promote the attachment of RNA polymerase to specific initiation sites and are then released. This sigma factor is essential for normal fruiting body formation. This is RNA polymerase sigma-C factor (sigC) from Myxococcus xanthus.